The primary structure comprises 194 residues: MGAQYLKRVYLMSVIAETNEALLAKIKALCGDYLREVDTHPGQWDDSSVRRLVRNPPAVYVAWLGQQPNNNPHTVTARWGVFVVAEVLNGQRRNAVGIYQIVETLTAGLHKQRIAPSGMFELQTVQNLWSDTQSGMGVAVYGMYFNAVQPLPDMTSDDTLCDFKIYDHTFNQDKDEHTIDGKTRLTVELPTQSD.

This sequence to phage Mu protein gp37.

This is Mu-like prophage FluMu protein gp37 from Haemophilus influenzae (strain ATCC 51907 / DSM 11121 / KW20 / Rd).